A 219-amino-acid chain; its full sequence is Orotate phosphoribosyltransferase (219 aa).

Residue K26 participates in 5-phospho-alpha-D-ribose 1-diphosphate binding. An orotate-binding site is contributed by 34 to 35 (FF). 5-phospho-alpha-D-ribose 1-diphosphate is bound by residues 72 to 73 (YK), R98, K99, K102, H104, and 124 to 132 (DDVITAGTA). Orotate-binding residues include T128 and R156.

Belongs to the purine/pyrimidine phosphoribosyltransferase family. PyrE subfamily. In terms of assembly, homodimer. It depends on Mg(2+) as a cofactor.

The enzyme catalyses orotidine 5'-phosphate + diphosphate = orotate + 5-phospho-alpha-D-ribose 1-diphosphate. It participates in pyrimidine metabolism; UMP biosynthesis via de novo pathway; UMP from orotate: step 1/2. Functionally, catalyzes the transfer of a ribosyl phosphate group from 5-phosphoribose 1-diphosphate to orotate, leading to the formation of orotidine monophosphate (OMP). The sequence is that of Orotate phosphoribosyltransferase from Stenotrophomonas maltophilia (strain K279a).